Reading from the N-terminus, the 284-residue chain is Bifunctional protein FolD (284 aa).

Residues 165–167 (GRS) and S190 each bind NADP(+).

This sequence belongs to the tetrahydrofolate dehydrogenase/cyclohydrolase family. In terms of assembly, homodimer.

It carries out the reaction (6R)-5,10-methylene-5,6,7,8-tetrahydrofolate + NADP(+) = (6R)-5,10-methenyltetrahydrofolate + NADPH. The catalysed reaction is (6R)-5,10-methenyltetrahydrofolate + H2O = (6R)-10-formyltetrahydrofolate + H(+). It functions in the pathway one-carbon metabolism; tetrahydrofolate interconversion. In terms of biological role, catalyzes the oxidation of 5,10-methylenetetrahydrofolate to 5,10-methenyltetrahydrofolate and then the hydrolysis of 5,10-methenyltetrahydrofolate to 10-formyltetrahydrofolate. This Streptococcus equi subsp. zooepidemicus (strain MGCS10565) protein is Bifunctional protein FolD.